The following is an 86-amino-acid chain: Neurotoxin E1x (86 aa).

The first 19 residues, Met1–Ala19, serve as a signal peptide directing secretion. Positions Lys20–Gly84 constitute an LCN-type CS-alpha/beta domain. Cystine bridges form between Cys30-Cys83, Cys34-Cys59, Cys43-Cys64, and Cys47-Cys66. Residue Cys83 is modified to Cysteine amide.

This sequence belongs to the long (4 C-C) scorpion toxin superfamily. Sodium channel inhibitor family. Beta subfamily. In terms of tissue distribution, expressed by the venom gland.

The protein localises to the secreted. In terms of biological role, binds to sodium channels (Nav) and inhibits the inactivation of the activated channels, thereby blocking neuronal transmission. In Centruroides sculpturatus (Arizona bark scorpion), this protein is Neurotoxin E1x.